The chain runs to 364 residues: Peroxisome biogenesis protein 3-2 (364 aa).

Residues 15–32 (VLVTAGCLGSGYLLYKLY) traverse the membrane as a helical segment. Positions 33–62 (NSHTRRLADLERELAHERENDEIIKTQMKA) form a coiled coil.

This sequence belongs to the peroxin-3 family.

It is found in the peroxisome membrane. Its function is as follows. Involved in morphology determination of peroxisomes, but not in import of peroxisomal matrix proteins. May act as a docking factor for PEX19 and be necessary for the import of peroxisomal membrane proteins in the peroxisomes. The sequence is that of Peroxisome biogenesis protein 3-2 (PEX3-2) from Arabidopsis thaliana (Mouse-ear cress).